The following is a 52-amino-acid chain: MGKQAEFWSESKNNSKIDGQPKAKSRFASKRPNGTINTHPQERMRAANQQEE.

The segment at 1-52 is disordered; it reads MGKQAEFWSESKNNSKIDGQPKAKSRFASKRPNGTINTHPQERMRAANQQEE.

This sequence belongs to the SspK family.

It is found in the spore core. This is Small, acid-soluble spore protein K from Bacillus anthracis (strain A0248).